The chain runs to 125 residues: Ribosome-binding factor A (125 aa).

It belongs to the RbfA family. As to quaternary structure, monomer. Binds 30S ribosomal subunits, but not 50S ribosomal subunits or 70S ribosomes.

The protein localises to the cytoplasm. Its function is as follows. One of several proteins that assist in the late maturation steps of the functional core of the 30S ribosomal subunit. Associates with free 30S ribosomal subunits (but not with 30S subunits that are part of 70S ribosomes or polysomes). Required for efficient processing of 16S rRNA. May interact with the 5'-terminal helix region of 16S rRNA. The polypeptide is Ribosome-binding factor A (Chloroherpeton thalassium (strain ATCC 35110 / GB-78)).